Here is a 524-residue protein sequence, read N- to C-terminus: Ribonuclease Y (524 aa).

Residues 2-22 form a helical membrane-spanning segment; sequence GIVINLFLIIAASIVFFVVGF. The KH domain maps to 214–299; the sequence is ALSVVHIQSD…KAYQDAKKEI (86 aa). One can recognise an HD domain in the interval 340-432; sequence LLQHSREVAM…VDAANIVSLS (93 aa).

The protein belongs to the RNase Y family.

Its subcellular location is the cell membrane. In terms of biological role, endoribonuclease that initiates mRNA decay. This chain is Ribonuclease Y, found in Chlorobaculum tepidum (strain ATCC 49652 / DSM 12025 / NBRC 103806 / TLS) (Chlorobium tepidum).